The chain runs to 227 residues: MAYPFQLGFQDASSPIMEELLHFHDHTLMIVFLISSLVLYIISLMLTTKLTHTSTMDAQEVETIWTILPAIILILIALPSLRILYMMDEINNPSLTVKTMGHQWYWSYEYTDYEDLNFDSYMIPTSDLNPGDLRLLEVDNRVVLPMELPIRMLISSEDVLHSWAVPSLGLKTDAIPGRLNQATLISTRPGLFYGQCSEICGSNHSFMPIVLEMVPLKHFENWSLSMI.

At 1–14 (MAYPFQLGFQDASS) the chain is on the mitochondrial intermembrane side. A helical transmembrane segment spans residues 15-45 (PIMEELLHFHDHTLMIVFLISSLVLYIISLM). The Mitochondrial matrix portion of the chain corresponds to 46-59 (LTTKLTHTSTMDAQ). A helical membrane pass occupies residues 60–87 (EVETIWTILPAIILILIALPSLRILYMM). Over 88 to 227 (DEINNPSLTV…HFENWSLSMI (140 aa)) the chain is Mitochondrial intermembrane. Positions 161, 196, 198, 200, 204, and 207 each coordinate Cu cation. Mg(2+) is bound at residue Glu-198.

Belongs to the cytochrome c oxidase subunit 2 family. Component of the cytochrome c oxidase (complex IV, CIV), a multisubunit enzyme composed of 14 subunits. The complex is composed of a catalytic core of 3 subunits MT-CO1, MT-CO2 and MT-CO3, encoded in the mitochondrial DNA, and 11 supernumerary subunits COX4I, COX5A, COX5B, COX6A, COX6B, COX6C, COX7A, COX7B, COX7C, COX8 and NDUFA4, which are encoded in the nuclear genome. The complex exists as a monomer or a dimer and forms supercomplexes (SCs) in the inner mitochondrial membrane with NADH-ubiquinone oxidoreductase (complex I, CI) and ubiquinol-cytochrome c oxidoreductase (cytochrome b-c1 complex, complex III, CIII), resulting in different assemblies (supercomplex SCI(1)III(2)IV(1) and megacomplex MCI(2)III(2)IV(2)). Found in a complex with TMEM177, COA6, COX18, COX20, SCO1 and SCO2. Interacts with TMEM177 in a COX20-dependent manner. Interacts with COX20. Interacts with COX16. Cu cation is required as a cofactor.

The protein localises to the mitochondrion inner membrane. The catalysed reaction is 4 Fe(II)-[cytochrome c] + O2 + 8 H(+)(in) = 4 Fe(III)-[cytochrome c] + 2 H2O + 4 H(+)(out). Component of the cytochrome c oxidase, the last enzyme in the mitochondrial electron transport chain which drives oxidative phosphorylation. The respiratory chain contains 3 multisubunit complexes succinate dehydrogenase (complex II, CII), ubiquinol-cytochrome c oxidoreductase (cytochrome b-c1 complex, complex III, CIII) and cytochrome c oxidase (complex IV, CIV), that cooperate to transfer electrons derived from NADH and succinate to molecular oxygen, creating an electrochemical gradient over the inner membrane that drives transmembrane transport and the ATP synthase. Cytochrome c oxidase is the component of the respiratory chain that catalyzes the reduction of oxygen to water. Electrons originating from reduced cytochrome c in the intermembrane space (IMS) are transferred via the dinuclear copper A center (CU(A)) of subunit 2 and heme A of subunit 1 to the active site in subunit 1, a binuclear center (BNC) formed by heme A3 and copper B (CU(B)). The BNC reduces molecular oxygen to 2 water molecules using 4 electrons from cytochrome c in the IMS and 4 protons from the mitochondrial matrix. The polypeptide is Cytochrome c oxidase subunit 2 (MT-CO2) (Oryctolagus cuniculus (Rabbit)).